The following is a 56-amino-acid chain: Ribosome modulation factor (56 aa).

It belongs to the ribosome modulation factor family.

The protein resides in the cytoplasm. Its function is as follows. During stationary phase, converts 70S ribosomes to an inactive dimeric form (100S ribosomes). The chain is Ribosome modulation factor from Serratia proteamaculans (strain 568).